The following is a 206-amino-acid chain: 2,3-bisphosphoglycerate-dependent phosphoglycerate mutase (206 aa).

Substrate-binding positions include 9–16, 22–23, R61, 88–91, K99, 115–116, and 159–160; these read RHGQSEWN, TG, ERDY, RR, and GN. The Tele-phosphohistidine intermediate role is filled by H10. The active-site Proton donor/acceptor is E88.

The protein belongs to the phosphoglycerate mutase family. BPG-dependent PGAM subfamily. Homodimer.

The enzyme catalyses (2R)-2-phosphoglycerate = (2R)-3-phosphoglycerate. It participates in carbohydrate degradation; glycolysis; pyruvate from D-glyceraldehyde 3-phosphate: step 3/5. In terms of biological role, catalyzes the interconversion of 2-phosphoglycerate and 3-phosphoglycerate. This is 2,3-bisphosphoglycerate-dependent phosphoglycerate mutase from Brucella abortus (strain S19).